Reading from the N-terminus, the 754-residue chain is Photosystem I P700 chlorophyll a apoprotein A1 (754 aa).

The next 8 helical transmembrane spans lie at 72-95, 158-181, 197-221, 293-311, 351-374, 390-416, 438-460, and 535-553; these read IFSAHFGHLAVIFVWLSGMYFHGA, LYCTAIGGLVMAGLMLFAGWFHYH, MNHHLAGLLGLGSLGWAGHQIHVSL, TAHHHLAIAVLFIIAGHMY, WHAQLAINLALLGSLSIIVAHHMY, LSLFTHHVWIGGFLIVGAGAHGAIFMV, AIISHLNWVCIFLGFHSFGLYIH, and FMVHHIHAFTIHVTVLILL. [4Fe-4S] cluster contacts are provided by C577 and C586. The next 2 helical transmembrane spans lie at 593–614 and 668–690; these read HVFLGLFWMYNSLSIVIFHFSW and LSAYGIMFLAGHFVFAFSLMFLF. H679 lines the chlorophyll a' pocket. Chlorophyll a-binding residues include M687 and Y695. W696 contacts phylloquinone. A helical membrane pass occupies residues 728–748; the sequence is AVGVAHYLLGGIVTTWAFFLA.

It belongs to the PsaA/PsaB family. In terms of assembly, the PsaA/B heterodimer binds the P700 chlorophyll special pair and subsequent electron acceptors. PSI consists of a core antenna complex that captures photons, and an electron transfer chain that converts photonic excitation into a charge separation. The cyanobacterial PSI reaction center is composed of one copy each of PsaA,B,C,D,E,F,I,J,K,L,M and X, and forms trimeric complexes. Requires PSI electron transfer chain: 5 chlorophyll a, 1 chlorophyll a', 2 phylloquinones and 3 4Fe-4S clusters. PSI core antenna: 90 chlorophyll a, 22 carotenoids, 3 phospholipids and 1 galactolipid. P700 is a chlorophyll a/chlorophyll a' dimer, A0 is one or more chlorophyll a, A1 is one or both phylloquinones and FX is a shared 4Fe-4S iron-sulfur center. as cofactor.

The protein resides in the cellular thylakoid membrane. It catalyses the reaction reduced [plastocyanin] + hnu + oxidized [2Fe-2S]-[ferredoxin] = oxidized [plastocyanin] + reduced [2Fe-2S]-[ferredoxin]. Functionally, psaA and PsaB bind P700, the primary electron donor of photosystem I (PSI), as well as the electron acceptors A0, A1 and FX. PSI is a plastocyanin/cytochrome c6-ferredoxin oxidoreductase, converting photonic excitation into a charge separation, which transfers an electron from the donor P700 chlorophyll pair to the spectroscopically characterized acceptors A0, A1, FX, FA and FB in turn. Oxidized P700 is reduced on the lumenal side of the thylakoid membrane by plastocyanin or cytochrome c6. In Rippkaea orientalis (strain PCC 8801 / RF-1) (Cyanothece sp. (strain PCC 8801)), this protein is Photosystem I P700 chlorophyll a apoprotein A1.